We begin with the raw amino-acid sequence, 326 residues long: MASKVSCLYVLTVVCWASALWYLSITRPTSSYTGSKPFSHLTVARKNFTFGNIRTRPINPHSFEFLINEPNKCEKNIPFLVILISTTHKEFDARQAIRETWGDENNFKGIKIATLFLLGKNADPVLNQMVEQESQIFHDIIVEDFIDSYHNLTLKTLMGMRWVATFCSKAKYVMKTDSDIFVNMDNLIYKLLKPSTKPRRRYFTGYVINGGPIRDVRSKWYMPRDLYPDSNYPPFCSGTGYIFSADVAELIYKTSLHTRLLHLEDVYVGLCLRKLGIHPFQNSGFNHWKMAYSLCRYRRVITVHQISPEEMHRIWNDMSSKKHLRC.

Topologically, residues 1–6 are cytoplasmic; sequence MASKVS. Residues 7 to 26 traverse the membrane as a helical; Signal-anchor for type II membrane protein segment; the sequence is CLYVLTVVCWASALWYLSIT. The Lumenal portion of the chain corresponds to 27–326; sequence RPTSSYTGSK…DMSSKKHLRC (300 aa). N-linked (GlcNAc...) asparagine glycans are attached at residues N47 and N151.

Belongs to the glycosyltransferase 31 family. Mn(2+) is required as a cofactor.

It is found in the golgi apparatus membrane. It catalyses the reaction an N-acetyl-beta-D-glucosaminyl derivative + UDP-alpha-D-galactose = a beta-D-galactosyl-(1-&gt;3)-N-acetyl-beta-D-glucosaminyl derivative + UDP + H(+). The catalysed reaction is a beta-D-GlcNAc-(1-&gt;3)-beta-D-Gal-(1-&gt;4)-beta-D-Glc-(1&lt;-&gt;1)-Cer(d18:1(4E)) + UDP-alpha-D-galactose = a beta-D-Gal-(1-&gt;3)-beta-D-GlcNAc-(1-&gt;3)-beta-D-Gal-(1-&gt;4)-beta-D-Glc-(1&lt;-&gt;1')-Cer(d18:1(4E)) + UDP + H(+). Its pathway is protein modification; protein glycosylation. Its function is as follows. Beta-1,3-galactosyltransferase that transfers galactose from UDP-galactose to substrates with a terminal beta-N-acetylglucosamine (beta-GlcNAc) residue. Involved in the biosynthesis of the carbohydrate moieties of glycolipids and glycoproteins. The chain is Beta-1,3-galactosyltransferase 1 (B3GALT1) from Gorilla gorilla gorilla (Western lowland gorilla).